Consider the following 100-residue polypeptide: Large ribosomal subunit protein uL23 (100 aa).

It belongs to the universal ribosomal protein uL23 family. Part of the 50S ribosomal subunit. Contacts protein L29, and trigger factor when it is bound to the ribosome.

In terms of biological role, one of the early assembly proteins it binds 23S rRNA. One of the proteins that surrounds the polypeptide exit tunnel on the outside of the ribosome. Forms the main docking site for trigger factor binding to the ribosome. This Pseudoalteromonas translucida (strain TAC 125) protein is Large ribosomal subunit protein uL23.